Reading from the N-terminus, the 21-residue chain is Bombinin-H4 (21 aa).

At I2 the chain carries D-allo-isoleucine. I20 carries the post-translational modification Isoleucine amide.

The protein belongs to the bombinin family. In terms of tissue distribution, expressed by the skin glands.

It localises to the secreted. Functionally, has antimicrobial and hemolytic activities. The sequence is that of Bombinin-H4 from Bombina variegata (Yellow-bellied toad).